Reading from the N-terminus, the 323-residue chain is Putative divalent cation/proton antiporter TMEM165 (323 aa).

Positions 1–33 are cleaved as a signal peptide; the sequence is MAAAARGSGRAPTRRLLVLLLLQLLWAPAGVRA. At 34–89 the chain is on the lumenal side; the sequence is GPEEDLSHRNQEPPAPAQQLQPQPAAVQGLEPARAEKGLTPVAPVHTNKEDAAAQT. Positions 35–44 are enriched in basic and acidic residues; it reads PEEDLSHRNQ. Residues 35-60 form a disordered region; sequence PEEDLSHRNQEPPAPAQQLQPQPAAV. The span at 50–59 shows a compositional bias: low complexity; that stretch reads AQQLQPQPAA. A helical membrane pass occupies residues 90 to 110; that stretch reads NLGFIHAFVAAISVIIVSELG. The Cytoplasmic portion of the chain corresponds to 111–126; sequence DKTFFIAAIMAMRYNR. The chain crosses the membrane as a helical span at residues 127–147; the sequence is LTVLAGAMLALALMTCLSVLF. Topologically, residues 148–151 are lumenal; sequence GYAT. Residues 152 to 172 traverse the membrane as a helical segment; it reads TVIPRVYTYYVSTALFAIFGI. Residues 173 to 227 are Cytoplasmic-facing; that stretch reads RMLREGLKMSPDEGQEELEEVQAELKKKDEEFQRTKLLNGPDVETGTSTAIPQKK. A coiled-coil region spans residues 184-211; it reads DEGQEELEEVQAELKKKDEEFQRTKLLN. Residues 228–248 traverse the membrane as a helical segment; sequence WLHFISPIFVQALTLTFLAEW. Residues 249–266 are Lumenal-facing; sequence GDRSQLTTIVLAAREDPY. Residues 267-287 form a helical membrane-spanning segment; the sequence is GVAVGGTVGHCLCTGLAVIGG. Residues 288–298 are Cytoplasmic-facing; that stretch reads RMIAQKISVRT. The helical transmembrane segment at 299–319 threads the bilayer; the sequence is VTIIGGIVFLAFAFSALFISP. Residues 320 to 323 lie on the Lumenal side of the membrane; sequence ESGF.

Belongs to the GDT1 family. In terms of tissue distribution, expressed in mammary epithelial cells (at protein level).

The protein resides in the golgi apparatus membrane. The enzyme catalyses Ca(2+)(in) + n H(+)(out) = Ca(2+)(out) + n H(+)(in). It carries out the reaction Mn(2+)(in) + n H(+)(out) = Mn(2+)(out) + n H(+)(in). Putative divalent cation:proton antiporter that exchanges calcium or manganese ions for protons across the Golgi membrane. Mediates the reversible transport of calcium or manganese to the Golgi lumen driven by the proton gradient and possibly the membrane potential generated by V-ATPase. Provides calcium or manganese cofactors to resident Golgi enzymes and contributes to the maintenance of an acidic luminal Golgi pH required for proper functioning of the secretory pathway. Promotes Ca(2+) storage within the Golgi lumen of the mammary epithelial cells to be then secreted into milk. The transport mechanism and stoichiometry remains to be elucidated. This chain is Putative divalent cation/proton antiporter TMEM165, found in Mus musculus (Mouse).